We begin with the raw amino-acid sequence, 431 residues long: Adenosylhomocysteinase (431 aa).

Substrate is bound by residues threonine 56, aspartate 131, and glutamate 156. 157–159 (TTT) is a binding site for NAD(+). Substrate contacts are provided by lysine 186 and aspartate 190. Residues asparagine 191, 222–227 (GDVGKG), glutamate 243, 299–301 (IGH), and asparagine 345 contribute to the NAD(+) site.

The protein belongs to the adenosylhomocysteinase family. In terms of assembly, homotetramer. Requires NAD(+) as cofactor.

The catalysed reaction is S-adenosyl-L-homocysteine + H2O = L-homocysteine + adenosine. It functions in the pathway amino-acid biosynthesis; L-homocysteine biosynthesis; L-homocysteine from S-adenosyl-L-homocysteine: step 1/1. Its function is as follows. Adenosylhomocysteine is a competitive inhibitor of S-adenosyl-L-methionine-dependent methyl transferase reactions; therefore adenosylhomocysteinase may play a key role in the control of methylations via regulation of the intracellular concentration of adenosylhomocysteine. The sequence is that of Adenosylhomocysteinase (sahA) from Dictyostelium discoideum (Social amoeba).